We begin with the raw amino-acid sequence, 286 residues long: Shikimate dehydrogenase (NADP(+)) (286 aa).

Shikimate is bound by residues 20–22 (SLS) and Thr-67. The active-site Proton acceptor is the Lys-71. Asn-92 and Asp-107 together coordinate shikimate. NADP(+) contacts are provided by residues 132 to 136 (GAGGA) and Met-228. Tyr-230 serves as a coordination point for shikimate. An NADP(+)-binding site is contributed by Gly-251.

This sequence belongs to the shikimate dehydrogenase family. Homodimer.

It carries out the reaction shikimate + NADP(+) = 3-dehydroshikimate + NADPH + H(+). It functions in the pathway metabolic intermediate biosynthesis; chorismate biosynthesis; chorismate from D-erythrose 4-phosphate and phosphoenolpyruvate: step 4/7. Its function is as follows. Involved in the biosynthesis of the chorismate, which leads to the biosynthesis of aromatic amino acids. Catalyzes the reversible NADPH linked reduction of 3-dehydroshikimate (DHSA) to yield shikimate (SA). This is Shikimate dehydrogenase (NADP(+)) from Geobacter metallireducens (strain ATCC 53774 / DSM 7210 / GS-15).